The following is an 82-amino-acid chain: UPF0154 protein SMU_1719c (82 aa).

Residues 4-24 form a helical membrane-spanning segment; the sequence is FLWILLVIIALLAGLVGGTFI.

This sequence belongs to the UPF0154 family.

The protein localises to the membrane. This Streptococcus mutans serotype c (strain ATCC 700610 / UA159) protein is UPF0154 protein SMU_1719c.